We begin with the raw amino-acid sequence, 177 residues long: Thymidine kinase (177 aa).

11 to 18 contributes to the ATP binding site; it reads GPMFSGKS. E83 functions as the Proton acceptor in the catalytic mechanism. F113 contacts substrate. Residues C138 and C141 each contribute to the Zn(2+) site. Residue 157-161 coordinates substrate; it reads IEIIG. Positions 170 and 173 each coordinate Zn(2+).

Belongs to the thymidine kinase family. As to quaternary structure, homotetramer. Two molecules of substrate bind to each enzyme tetramer.

The enzyme catalyses thymidine + ATP = dTMP + ADP + H(+). Phosphorylates thymidine and thymidine analogs, such as azidothymidine (AZT). Part of the salvage pathway for pyrimidine deoxyribonucleotide synthesis. In Cynomys gunnisoni (Gunnison's prairie dog), this protein is Thymidine kinase (OPG101).